Consider the following 299-residue polypeptide: ATP phosphoribosyltransferase (299 aa).

It belongs to the ATP phosphoribosyltransferase family. Long subfamily. Equilibrium between an active dimeric form, an inactive hexameric form and higher aggregates. Interconversion between the various forms is largely reversible and is influenced by the natural substrates and inhibitors of the enzyme. Mg(2+) serves as cofactor.

The protein localises to the cytoplasm. It catalyses the reaction 1-(5-phospho-beta-D-ribosyl)-ATP + diphosphate = 5-phospho-alpha-D-ribose 1-diphosphate + ATP. Its pathway is amino-acid biosynthesis; L-histidine biosynthesis; L-histidine from 5-phospho-alpha-D-ribose 1-diphosphate: step 1/9. Its activity is regulated as follows. Feedback inhibited by histidine. In terms of biological role, catalyzes the condensation of ATP and 5-phosphoribose 1-diphosphate to form N'-(5'-phosphoribosyl)-ATP (PR-ATP). Has a crucial role in the pathway because the rate of histidine biosynthesis seems to be controlled primarily by regulation of HisG enzymatic activity. In Salmonella agona (strain SL483), this protein is ATP phosphoribosyltransferase.